A 454-amino-acid chain; its full sequence is Replicative DNA helicase DnaC (454 aa).

Residues 179 to 445 form the SF4 helicase domain; sequence RKGDITGIPT…NKFVNLERRF (267 aa). 210 to 217 lines the ATP pocket; the sequence is ARPSVGKT.

The protein belongs to the helicase family. DnaB subfamily. The DNA replisome assembles sequentially on oriC in this order; DnaA, DnaD, DnaB, DnaI-DnaC helicase. Monomer in the absence of ATP, in its presence forms a probable homohexamer which is not active as a helicase in vitro. Interacts separately and simultaneously with helicase loaders DnaB and DnaI. Interaction with DnaB does not require ATP. Interaction with DnaI requires ATP, probably forms a DnaC(6):DnaI(6) complex, which is not active as a helicase.

The protein localises to the cytoplasm. It is found in the nucleoid. The catalysed reaction is Couples ATP hydrolysis with the unwinding of duplex DNA at the replication fork by translocating in the 5'-3' direction. This creates two antiparallel DNA single strands (ssDNA). The leading ssDNA polymer is the template for DNA polymerase III holoenzyme which synthesizes a continuous strand.. It catalyses the reaction ATP + H2O = ADP + phosphate + H(+). The main replicative DNA helicase, it participates in initiation and elongation during chromosome replication. Travels ahead of the DNA replisome, separating dsDNA into templates for DNA synthesis. The monomer has helicase activity in the presence of DnaI which is further increased by DnaB; the purified oligomeric form (probably a DnaC hexamer) does not have helicase activity in vitro, nor does the DnaC(6):DnaI(6) complex. The direction was not determined but is probably 5'-3'. Helicase activity requires an rNTP and is inactive with dNTPs. Has weak ATPase activity as a monomer, as an oligomer has ATPase activity which is stimulated by single-stranded (ss)DNA and further stimulated by DnaI and more by DnaB. Functionally, deletion of a single T residue in the promoter region (a run of 8 Ts becomes 7 Ts) decreases the helicase levels by 50%, decreasing DNA replication inititation during fast growth in rich medium. Suppresses the synthetic lethality of a dnaA1-yabA deletion for growth on rich medium. This Bacillus subtilis (strain 168) protein is Replicative DNA helicase DnaC.